The primary structure comprises 447 residues: QLKGMISVGPWGGQGGDHWSFKANHAITEILIHVKDNIKSISFKDASGDISGTFGGKDPRENEKGDEKKIGIHWPTEYLKSISGSYGDYNGLLVIRSLSFITNLTTYGSFGSTSGGESFSIPIADSVVVGFHGRGGYYLDALGVFVKPVPHGTISFGPWGGPAGDDAFNFKVGSWIKDIIIYSNGAIQSIAFKDGNGHCYGKFGGKDPNDIGVEKKVEIDGNLEHLTSISGTYGNYKGFEVVTSLSFITNVTKHGPFGTASGTSFSIPIEGSLVTGFHGKGGYYLDSIGIYVKPRDVEGSISIGPWGGSGGDPWSYTANEGINQIIIYAGSDIKSLAFKDTSGFDSATFGGVNPKDTGEKNTVSINWPSEYLTSISGTYGQYKFKDVFTTITSLSFTTNLATYGPFGKASGTSFSVPINNNTVLGFHGRAGDYLDAIGIFVKPDTAV.

Jacalin-type lectin domains follow at residues 5–148, 153–294, and 300–443; these read MISV…FVKP, TISF…YVKP, and SISI…FVKP.

The protein belongs to the jacalin lectin family. Expressed in seeds (at protein level).

With respect to regulation, hemagglutinating activity is slightly inhibited by alpha-methyl-D-mannopyranoside. Its function is as follows. D-mannose/D-glucose-binding lectin that also binds derivatives N-acetyl-D-glucosamine and alpha-methyl-D-mannopyranoside. Does not bind D-galactose, L-Rhamnose, D-fructose, lactose or glycoproteins fetiun and mucin. Shows agglutinating activity towards human and rabbit erythrocytes. Also displays antimicrobial activity against L.infantum. This Parkia pendula (Inga pendula) protein is Mannose/glucose-specific lectin.